Here is an 85-residue protein sequence, read N- to C-terminus: MAHKKGVGSTRNGRDSESKRLGCKKFGGETVKAGNIIYRQRGTQIHPGTNVGCGKDYTLFALIDGVVKFERLGRDRKKVSVYPAN.

The tract at residues 1 to 21 (MAHKKGVGSTRNGRDSESKRL) is disordered.

The protein belongs to the bacterial ribosomal protein bL27 family.

The polypeptide is Large ribosomal subunit protein bL27 (Geobacter sulfurreducens (strain ATCC 51573 / DSM 12127 / PCA)).